Here is a 119-residue protein sequence, read N- to C-terminus: U-scoloptoxin(01)-Cw1a (119 aa).

A signal peptide spans 1–22 (MSKATNFYLFVLLGVFVALVRT). In terms of domain architecture, Chitin-binding type-2 spans 38–96 (SFSCDGKKPGYYADQQMECQVYHVCTPDNEHAVLLCGPGTIFNQKHLVCDFPSNYACAD). Cys73 and Cys86 are disulfide-bonded.

This sequence belongs to the scoloptoxin-01 family. Post-translationally, contains 3 disulfide bonds. Expressed by the venom gland.

Its subcellular location is the secreted. The chain is U-scoloptoxin(01)-Cw1a from Cormocephalus westwoodi (Westwood's green centipede).